A 634-amino-acid polypeptide reads, in one-letter code: Probable LRR receptor-like serine/threonine-protein kinase At2g23950 (634 aa).

The first 27 residues, 1 to 27 (MVVMKLITMKIFSVLLLLCFFVTCSLS), serve as a signal peptide directing secretion. The Extracellular segment spans residues 28–236 (SEPRNPEVEA…SSGRRTNILA (209 aa)). Asn-96 and Asn-109 each carry an N-linked (GlcNAc...) asparagine glycan. LRR repeat units follow at residues 99–121 (NLRQ…ICSL), 123–145 (KLQT…VNQL), 147–167 (NLQY…ASLS), and 171–193 (HLSF…PART). Residue Asn-155 is glycosylated (N-linked (GlcNAc...) asparagine). The chain crosses the membrane as a helical span at residues 237 to 257 (VALGVSLGFAVSVILSLGFIW). Topologically, residues 258 to 634 (YRKKQRRLTM…SFAMELSGPR (377 aa)) are cytoplasmic. A Phosphothreonine modification is found at Thr-296. The Protein kinase domain maps to 299 to 554 (FSSKSILGAG…QVALLCTQFL (256 aa)). An ATP-binding site is contributed by 305 to 313 (LGAGGFGNV). A Phosphothreonine modification is found at Thr-322. ATP is bound at residue Lys-327. Residues Ser-380 and Ser-383 each carry the phosphoserine modification. Thr-395 is subject to Phosphothreonine. The Proton acceptor role is filled by Asp-422. Phosphothreonine occurs at positions 455, 456, and 461. The residue at position 469 (Tyr-469) is a Phosphotyrosine. A Phosphoserine modification is found at Ser-471. Thr-472 bears the Phosphothreonine mark. Ser-476 is subject to Phosphoserine. Position 551 is a phosphothreonine (Thr-551).

It belongs to the protein kinase superfamily. Ser/Thr protein kinase family.

It is found in the membrane. It catalyses the reaction L-seryl-[protein] + ATP = O-phospho-L-seryl-[protein] + ADP + H(+). The enzyme catalyses L-threonyl-[protein] + ATP = O-phospho-L-threonyl-[protein] + ADP + H(+). The protein is Probable LRR receptor-like serine/threonine-protein kinase At2g23950 of Arabidopsis thaliana (Mouse-ear cress).